Reading from the N-terminus, the 447-residue chain is Cytochrome P450 BJ-4 (447 aa).

C392 contacts heme.

The protein belongs to the cytochrome P450 family. The cofactor is heme.

Its function is as follows. Cytochromes P450 are a group of heme-thiolate monooxygenases. They oxidize a variety of structurally unrelated compounds, including steroids, fatty acids, and xenobiotics. The chain is Cytochrome P450 BJ-4 (cyp117) from Bradyrhizobium diazoefficiens (strain JCM 10833 / BCRC 13528 / IAM 13628 / NBRC 14792 / USDA 110).